Here is a 137-residue protein sequence, read N- to C-terminus: Protein MGF 110-7L (137 aa).

The signal sequence occupies residues 1–20 (MLVIILGVIGLLASSNLVSS). Asn-69, Asn-70, and Asn-105 each carry an N-linked (GlcNAc...) asparagine; by host glycan.

This sequence belongs to the asfaviruses V110 family.

The chain is Protein MGF 110-7L from Ornithodoros (relapsing fever ticks).